Here is a 479-residue protein sequence, read N- to C-terminus: Transmembrane protein 161A (479 aa).

The N-terminal stretch at 1–28 (MAVLGVQLVVTLLTATLMHRLAPHCSFA) is a signal peptide. The Extracellular portion of the chain corresponds to 29–98 (RWLLCNGSLF…LTTVDALVLR (70 aa)). Asparagine 34 carries N-linked (GlcNAc...) asparagine glycosylation. Serine 69 carries the phosphoserine modification. The helical transmembrane segment at 99–119 (FFLEYQWFVDFAVYSGGVYLF) threads the bilayer. The Cytoplasmic portion of the chain corresponds to 120-134 (TEAYYYMLGPAKETN). Residues 135 to 155 (IAVFWCLLTVTFSIKMFLTVT) traverse the membrane as a helical segment. Topologically, residues 156–166 (RLYFSAEEGGE) are extracellular. Residues 167–187 (RSVCLTFAFLFLLLAMLVQVV) form a helical membrane-spanning segment. The Cytoplasmic portion of the chain corresponds to 188–224 (REETLELGLEPGLASMTQNLEPLLKKQGWDWALPVAK). Residues 225-245 (LAIRVGLAVVGSVLGAFLTFP) traverse the membrane as a helical segment. Residues 246-263 (GLRLAQTHRDALTMSEDR) lie on the Extracellular side of the membrane. Residues 264-284 (PMLQFLLHTSFLSPLFILWLW) form a helical membrane-spanning segment. The Cytoplasmic portion of the chain corresponds to 285 to 304 (TKPIARDFLHQPPFGETRFS). Residues 305 to 325 (LLSDSAFDSGRLWLLVVLCLL) traverse the membrane as a helical segment. Residues 326–370 (RLAVTRPHLQAYLCLAKARVEQLRREAGRIEAREIQQRVVRVYCY) lie on the Extracellular side of the membrane. The helical transmembrane segment at 371–391 (VTVVSLQYLTPLILTLNCTLL) threads the bilayer. Topologically, residues 392-449 (LKTLGGYSWGLGPAPLLSPDPSSASAAPIGSGEDEVQQTAARIAGALGGLLTPLFLRG) are cytoplasmic. The chain crosses the membrane as a helical span at residues 450–470 (VLAYLIWWTAACQLLASLFGL). Residues 471–479 (YFHQHLAGS) lie on the Extracellular side of the membrane.

Belongs to the TMEM161 family.

The protein localises to the membrane. In terms of biological role, may play a role in protection against oxidative stress. Overexpression leads to reduced levels of oxidant-induced DNA damage and apoptosis. The polypeptide is Transmembrane protein 161A (TMEM161A) (Homo sapiens (Human)).